A 630-amino-acid chain; its full sequence is tRNA uridine 5-carboxymethylaminomethyl modification enzyme MnmG (630 aa).

13-18 is a binding site for FAD; that stretch reads GGGHAG. 273–287 provides a ligand contact to NAD(+); it reads GPRYCPSIEDKIHRF.

This sequence belongs to the MnmG family. As to quaternary structure, homodimer. Heterotetramer of two MnmE and two MnmG subunits. FAD is required as a cofactor.

It is found in the cytoplasm. Functionally, NAD-binding protein involved in the addition of a carboxymethylaminomethyl (cmnm) group at the wobble position (U34) of certain tRNAs, forming tRNA-cmnm(5)s(2)U34. This Pseudomonas putida (strain GB-1) protein is tRNA uridine 5-carboxymethylaminomethyl modification enzyme MnmG.